The chain runs to 419 residues: ATP-dependent RNA helicase RhlB (419 aa).

The short motif at 9–37 (QRFSDLALHRSVQQAIKEKGFEFCTPIQA) is the Q motif element. The Helicase ATP-binding domain maps to 40–217 (LPITLKGQDI…FEHMNDPQYV (178 aa)). ATP is bound at residue 53–60 (AQTGTGKT). The short motif at 163–166 (DEAD) is the DEAD box element. Residues 241–388 (KMALLMTLLE…VSQYDAKALI (148 aa)) form the Helicase C-terminal domain.

This sequence belongs to the DEAD box helicase family. RhlB subfamily. As to quaternary structure, component of the RNA degradosome, which is a multiprotein complex involved in RNA processing and mRNA degradation.

The protein localises to the cytoplasm. It catalyses the reaction ATP + H2O = ADP + phosphate + H(+). In terms of biological role, DEAD-box RNA helicase involved in RNA degradation. Has RNA-dependent ATPase activity and unwinds double-stranded RNA. The polypeptide is ATP-dependent RNA helicase RhlB (Histophilus somni (strain 129Pt) (Haemophilus somnus)).